A 451-amino-acid polypeptide reads, in one-letter code: Cobalamin reductase PduS (451 aa).

2 4Fe-4S ferredoxin-type domains span residues 255–284 and 300–330; these read TVLS…HELS and PQLL…MRIN. The [4Fe-4S] cluster site is built by C264, C267, C270, C274, C309, C312, C315, and C320.

It belongs to the PduS cobalamin reductase family. As to quaternary structure, monomeric when purified anaerobically, dimeric under aerobic conditions. Forms a complex with PduO. Interacts with PduT, probably via the N-terminus of PduS. Requires [4Fe-4S] cluster as cofactor. FMN is required as a cofactor.

Its subcellular location is the bacterial microcompartment. Its pathway is polyol metabolism; 1,2-propanediol degradation. Functionally, a protein that aids in conversion of cob(III)alamin to cob(II)alamin and then to cob(I)alamin in the bacterial microcompartment (BMC) dedicated to 1,2-propanediol (1,2-PD) degradation. The latter step requires PduO. No free cob(I)alamin is released, suggesting a complex is formed with PduO that finishes conversion to adenosylcobalamin. PduS and PduO allow regeneration of the adenosylcobalamin cofactor within the BMC. Another study showed reduction of cob(II)alamin to cob(I)alamin in the absence of PduO. Both reactions require NADH. Cyanocobalamin (CN-Cbl) is not a substrate for the first reaction. Cobalamin reduction probably occurs spontaneously in the presence of free reduced flavin nucleotides, this protein may be involved in electron transfer for this reduction. The 1,2-PD-specific bacterial microcompartment (BMC) concentrates low levels of 1,2-PD catabolic enzymes, concentrates volatile reaction intermediates thus enhancing pathway flux and keeps the level of toxic, mutagenic propionaldehyde low. The polypeptide is Cobalamin reductase PduS (Salmonella typhimurium (strain LT2 / SGSC1412 / ATCC 700720)).